The chain runs to 141 residues: Putative nickel-responsive regulator (141 aa).

Ni(2+)-binding residues include H83, H94, H96, and C102.

It belongs to the transcriptional regulatory CopG/NikR family. It depends on Ni(2+) as a cofactor.

Its function is as follows. Transcriptional regulator. The polypeptide is Putative nickel-responsive regulator (Methanopyrus kandleri (strain AV19 / DSM 6324 / JCM 9639 / NBRC 100938)).